Here is a 326-residue protein sequence, read N- to C-terminus: D-alanine--D-alanine ligase (326 aa).

The ATP-grasp domain occupies 112–312 (KRIWRFEGLP…YENLCLGILA (201 aa)). Residue 138-193 (LQALGAPMIVKPSREGSTIGLTKVWTAEECDQAYVLASRYDPEVLCEEFIEGDETT) coordinates ATP. Mg(2+) is bound by residues aspartate 265, glutamate 279, and asparagine 281.

The protein belongs to the D-alanine--D-alanine ligase family. Mg(2+) is required as a cofactor. Mn(2+) serves as cofactor.

It is found in the cytoplasm. It catalyses the reaction 2 D-alanine + ATP = D-alanyl-D-alanine + ADP + phosphate + H(+). It participates in cell wall biogenesis; peptidoglycan biosynthesis. Functionally, cell wall formation. In Delftia acidovorans (strain DSM 14801 / SPH-1), this protein is D-alanine--D-alanine ligase.